The primary structure comprises 285 residues: Protease HtpX homolog (285 aa).

2 helical membrane passes run 7 to 27 and 30 to 50; these read TAMLMAAITALFIVIGGMIGG and GMTIALLIALGMNFFSYWFSD. His-131 provides a ligand contact to Zn(2+). Residue Glu-132 is part of the active site. His-135 provides a ligand contact to Zn(2+). 2 consecutive transmembrane segments (helical) span residues 146–166 and 177–197; these read ISATMAGAISALANFAMFFGG and IAGIAVALLAPIAGALIQMAI. A Zn(2+)-binding site is contributed by Glu-202.

The protein belongs to the peptidase M48B family. Zn(2+) is required as a cofactor.

It is found in the cell inner membrane. This Burkholderia thailandensis (strain ATCC 700388 / DSM 13276 / CCUG 48851 / CIP 106301 / E264) protein is Protease HtpX homolog.